Reading from the N-terminus, the 437-residue chain is Trigger factor (437 aa).

Residues 163 to 248 (SDRVIIDFEG…LNNVSEATLP (86 aa)) form the PPIase FKBP-type domain.

This sequence belongs to the FKBP-type PPIase family. Tig subfamily.

Its subcellular location is the cytoplasm. It carries out the reaction [protein]-peptidylproline (omega=180) = [protein]-peptidylproline (omega=0). Involved in protein export. Acts as a chaperone by maintaining the newly synthesized protein in an open conformation. Functions as a peptidyl-prolyl cis-trans isomerase. The chain is Trigger factor from Neisseria meningitidis serogroup C / serotype 2a (strain ATCC 700532 / DSM 15464 / FAM18).